The following is a 685-amino-acid chain: Protein snwA (685 aa).

4 disordered regions span residues 1–62, 88–112, 347–573, and 605–685; these read MTSL…GYLP, RKGKSKSSNSNTSNMNGGGTTTSIV, LAED…DSIY, and AVSN…SKKR. 2 stretches are compositionally biased toward low complexity: residues 30–41 and 93–102; these read PQQQKQQQQQQQ and KSSNSNTSNM. Residues 194-360 are SNW; sequence ATYIKYTPSN…VRNERSGIIQ (167 aa). A compositionally biased stretch (acidic residues) spans 370-381; the sequence is DSDNDNDNDSSS. Positions 399-494 are enriched in basic and acidic residues; that stretch reads RSTERIPSRN…DRYSKRRSDS (96 aa). Over residues 495–507 the composition is skewed to acidic residues; sequence DSDSDSDSSDSED. The span at 508–556 shows a compositional bias: basic and acidic residues; the sequence is ERVRRERKEKLERDKIRMEKKRELEREYRLEASGKKSKFNRDQDRDISE. Over residues 618–631 the composition is skewed to polar residues; it reads EDNTSIQDVLSNSR. Residues 646 to 685 are compositionally biased toward basic and acidic residues; the sequence is PNKEFSGTDRSKDRTGPVAFEKEKKKSDDPFGFDDFSKKR.

This sequence belongs to the SNW family. Interacts with cypE.

The protein resides in the nucleus. The protein is Protein snwA (snwA) of Dictyostelium discoideum (Social amoeba).